Here is a 211-residue protein sequence, read N- to C-terminus: ATP phosphoribosyltransferase (211 aa).

It belongs to the ATP phosphoribosyltransferase family. Short subfamily. In terms of assembly, heteromultimer composed of HisG and HisZ subunits.

It localises to the cytoplasm. The catalysed reaction is 1-(5-phospho-beta-D-ribosyl)-ATP + diphosphate = 5-phospho-alpha-D-ribose 1-diphosphate + ATP. It participates in amino-acid biosynthesis; L-histidine biosynthesis; L-histidine from 5-phospho-alpha-D-ribose 1-diphosphate: step 1/9. Functionally, catalyzes the condensation of ATP and 5-phosphoribose 1-diphosphate to form N'-(5'-phosphoribosyl)-ATP (PR-ATP). Has a crucial role in the pathway because the rate of histidine biosynthesis seems to be controlled primarily by regulation of HisG enzymatic activity. This is ATP phosphoribosyltransferase from Pseudomonas syringae pv. tomato (strain ATCC BAA-871 / DC3000).